The sequence spans 281 residues: Nucleotide-binding protein PSHAa2554 (281 aa).

8–15 (GRSGSGKS) contributes to the ATP binding site. 56 to 59 (DVRN) lines the GTP pocket.

Belongs to the RapZ-like family.

Displays ATPase and GTPase activities. This is Nucleotide-binding protein PSHAa2554 from Pseudoalteromonas translucida (strain TAC 125).